A 64-amino-acid polypeptide reads, in one-letter code: Large ribosomal subunit protein bL33 (64 aa).

The segment at 19–40 (TSTDPKRSNGVSRYTTEKNRRN) is disordered.

Belongs to the bacterial ribosomal protein bL33 family.

The polypeptide is Large ribosomal subunit protein bL33 (Prochlorococcus marinus (strain MIT 9215)).